Here is a 46-residue protein sequence, read N- to C-terminus: Esculentin-1SEb (46 aa).

A disulfide bridge connects residues cysteine 40 and cysteine 46.

In terms of tissue distribution, expressed by the skin glands.

The protein resides in the secreted. Its function is as follows. Mast cell degranulating peptide. Causes histamine release from rat peritoneal mast cells in vitro. Has antibacterial activity against the Gram-negative bacterium E.coli K12 and Gram-positive bacterium M.luteus NCT C2665. The chain is Esculentin-1SEb from Lithobates sevosus (Dusky gopher frog).